Reading from the N-terminus, the 620-residue chain is mRNA cap guanine-N(7) methyltransferase (620 aa).

Disordered stretches follow at residues methionine 1–serine 176 and alanine 193–tyrosine 304. Polar residues predominate over residues arginine 29–leucine 44. 2 stretches are compositionally biased toward low complexity: residues proline 45–proline 60 and proline 136–histidine 157. Positions serine 345–methionine 620 constitute an mRNA cap 0 methyltransferase domain. Asparagine 354 to asparagine 355 serves as a coordination point for mRNA. Positions 358, 377, 399, 428, 454, and 459 each coordinate S-adenosyl-L-methionine.

It belongs to the class I-like SAM-binding methyltransferase superfamily. mRNA cap 0 methyltransferase family.

It localises to the nucleus. The enzyme catalyses a 5'-end (5'-triphosphoguanosine)-ribonucleoside in mRNA + S-adenosyl-L-methionine = a 5'-end (N(7)-methyl 5'-triphosphoguanosine)-ribonucleoside in mRNA + S-adenosyl-L-homocysteine. Its function is as follows. Responsible for methylating the 5'-cap structure of mRNAs. The sequence is that of mRNA cap guanine-N(7) methyltransferase (ABD1) from Cryptococcus neoformans var. neoformans serotype D (strain JEC21 / ATCC MYA-565) (Filobasidiella neoformans).